The primary structure comprises 200 residues: ADP-ribosylation factor-like protein 4A (200 aa).

Gly-2 carries N-myristoyl glycine lipidation. GTP-binding positions include 27–34 (GLDCAGKT), 75–79 (DVGGQ), and 134–137 (NKQD).

The protein belongs to the small GTPase superfamily. Arf family. Interacts with CYTH2. Interacts with KPNA2; the interaction is direct. Does not interact with ARL4A. Post-translationally, myristoylated.

The protein resides in the cell membrane. It localises to the cytoplasm. It is found in the nucleus. Its subcellular location is the nucleolus. Small GTP-binding protein which cycles between an inactive GDP-bound and an active GTP-bound form, and the rate of cycling is regulated by guanine nucleotide exchange factors (GEF) and GTPase-activating proteins (GAP). GTP-binding protein that does not act as an allosteric activator of the cholera toxin catalytic subunit. Recruits CYTH1, CYTH2, CYTH3 and CYTH4 to the plasma membrane in GDP-bound form. The polypeptide is ADP-ribosylation factor-like protein 4A (ARL4A) (Homo sapiens (Human)).